The sequence spans 388 residues: MSRMNYVFTSESVSEGHPDKLCDRVSDAVLDTFLAEEPTARVACETFATTGRVVVGGEVGLSDPQKLDEFMERVDGIVRDCVKDIGYEQQEFHWRTIEVQNFLHRQSAHIAQGVDKDGAGDQGIMFGYACRETPELMPAPIQYSHAILRRLAEVRKSGQEPDLRPDAKSQLSLRYENGKPVEVRSIVLSTQHAHEEQTSDDIRAIVEPYIREVLPEGWITEATEWWVNPTGTFVIGGPDGDAGLTGRKIIVDTYGGAAPHGGGAFSGKDPTKVDRSAAYAARYLAKNVVAAGLAERCTLQVSYAIGVAKPLSIYVDTHGTGQVDAAQIEKAVADCMDLTPRGIREHLNLCRPIYARTSAYGHFGRAPEADGGFSWERTDLTDALLKAV.

His-17 is an ATP binding site. Asp-19 is a Mg(2+) binding site. Glu-45 contributes to the K(+) binding site. Residues Glu-58 and Gln-106 each contribute to the L-methionine site. Residues 106–116 (QSAHIAQGVDK) are flexible loop. ATP contacts are provided by residues 166–168 (DAK), Asp-241, 247–248 (RK), Ala-264, and Lys-268. Asp-241 lines the L-methionine pocket. Lys-272 serves as a coordination point for L-methionine.

The protein belongs to the AdoMet synthase family. Homotetramer; dimer of dimers. Requires Mg(2+) as cofactor. It depends on K(+) as a cofactor.

Its subcellular location is the cytoplasm. The enzyme catalyses L-methionine + ATP + H2O = S-adenosyl-L-methionine + phosphate + diphosphate. It functions in the pathway amino-acid biosynthesis; S-adenosyl-L-methionine biosynthesis; S-adenosyl-L-methionine from L-methionine: step 1/1. In terms of biological role, catalyzes the formation of S-adenosylmethionine (AdoMet) from methionine and ATP. The overall synthetic reaction is composed of two sequential steps, AdoMet formation and the subsequent tripolyphosphate hydrolysis which occurs prior to release of AdoMet from the enzyme. The polypeptide is S-adenosylmethionine synthase (Cereibacter sphaeroides (strain ATCC 17023 / DSM 158 / JCM 6121 / CCUG 31486 / LMG 2827 / NBRC 12203 / NCIMB 8253 / ATH 2.4.1.) (Rhodobacter sphaeroides)).